The following is a 491-amino-acid chain: Glycogen synthase (491 aa).

Arg20 contacts ADP-alpha-D-glucose.

It belongs to the glycosyltransferase 1 family. Bacterial/plant glycogen synthase subfamily.

The enzyme catalyses [(1-&gt;4)-alpha-D-glucosyl](n) + ADP-alpha-D-glucose = [(1-&gt;4)-alpha-D-glucosyl](n+1) + ADP + H(+). The protein operates within glycan biosynthesis; glycogen biosynthesis. Functionally, synthesizes alpha-1,4-glucan chains using ADP-glucose. The sequence is that of Glycogen synthase from Prosthecochloris aestuarii (strain DSM 271 / SK 413).